The following is a 176-amino-acid chain: Large ribosomal subunit protein uL15 (176 aa).

Over residues 1-13 (MKLNDLRDNEGAR) the composition is skewed to basic and acidic residues. 2 disordered regions span residues 1-48 (MKLN…AIKG) and 151-176 (IPAA…AKAE). Over residues 21-35 (RGIGSGKGKTGGRGQ) the composition is skewed to gly residues. Basic and acidic residues predominate over residues 156 to 176 (PEHEKKAARSEANKKAKAKAE).

The protein belongs to the universal ribosomal protein uL15 family. Part of the 50S ribosomal subunit.

In terms of biological role, binds to the 23S rRNA. This Erythrobacter litoralis (strain HTCC2594) protein is Large ribosomal subunit protein uL15.